Reading from the N-terminus, the 487-residue chain is uncharacterized protein (487 aa).

A helical transmembrane segment spans residues 7-28 (HVISIFETLGAYFINIFYNFLY). 3 N-linked (GlcNAc...) asparagine; by host glycosylation sites follow: asparagine 73, asparagine 83, and asparagine 195. A coiled-coil region spans residues 196 to 235 (RSLLHQIEELTSEKKSLLADLSTLRKKYEKRQSEYRRLVQ). The segment covering 294–305 (TSQELTSKSPNN) has biased composition (polar residues). The disordered stretch occupies residues 294 to 324 (TSQELTSKSPNNYPVPHSRTIVSKPSDNYPV). The N-linked (GlcNAc...) asparagine; by host glycan is linked to asparagine 462.

The protein belongs to the asfivirus B475L family.

The protein localises to the host membrane. This is an uncharacterized protein from African swine fever virus (isolate Tick/South Africa/Pretoriuskop Pr4/1996) (ASFV).